Reading from the N-terminus, the 504-residue chain is 5-epiaristolochene 1,3-dihydroxylase (504 aa).

A helical transmembrane segment spans residues 2-22 (QFFSLVSIFLFLSFLFLLRKW). Cysteine 442 contacts heme.

The protein belongs to the cytochrome P450 family. Heme is required as a cofactor.

The protein localises to the membrane. It carries out the reaction (+)-5-epi-aristolochene + 2 reduced [NADPH--hemoprotein reductase] + 2 O2 = capsidiol + 2 oxidized [NADPH--hemoprotein reductase] + 2 H2O + 2 H(+). With respect to regulation, inhibited by ancymidol and ketoconazole. Its function is as follows. Involved in the biosynthesis of capsidiol. Catalyzes the successive and independent hydroxylations at the C1 and C3 positions of 5-epiaristolochene. The second hydroxylation step is 8-fold more efficient than the first hydroxylation reaction. Capable of utilizing premnaspirodiene as a substrate. The polypeptide is 5-epiaristolochene 1,3-dihydroxylase (CYP71D20) (Nicotiana tabacum (Common tobacco)).